A 249-amino-acid chain; its full sequence is 1-(5-phosphoribosyl)-5-[(5-phosphoribosylamino)methylideneamino] imidazole-4-carboxamide isomerase (249 aa).

The Proton acceptor role is filled by aspartate 8. The Proton donor role is filled by aspartate 129.

The protein belongs to the HisA/HisF family.

Its subcellular location is the cytoplasm. It carries out the reaction 1-(5-phospho-beta-D-ribosyl)-5-[(5-phospho-beta-D-ribosylamino)methylideneamino]imidazole-4-carboxamide = 5-[(5-phospho-1-deoxy-D-ribulos-1-ylimino)methylamino]-1-(5-phospho-beta-D-ribosyl)imidazole-4-carboxamide. It participates in amino-acid biosynthesis; L-histidine biosynthesis; L-histidine from 5-phospho-alpha-D-ribose 1-diphosphate: step 4/9. The protein is 1-(5-phosphoribosyl)-5-[(5-phosphoribosylamino)methylideneamino] imidazole-4-carboxamide isomerase of Rhizobium rhizogenes (strain K84 / ATCC BAA-868) (Agrobacterium radiobacter).